We begin with the raw amino-acid sequence, 422 residues long: D-amino acid dehydrogenase (422 aa).

3–17 (VVVIGAGVVGTASAW) lines the FAD pocket.

The protein belongs to the DadA oxidoreductase family. The cofactor is FAD.

The enzyme catalyses a D-alpha-amino acid + A + H2O = a 2-oxocarboxylate + AH2 + NH4(+). The protein operates within amino-acid degradation; D-alanine degradation; NH(3) and pyruvate from D-alanine: step 1/1. Functionally, oxidative deamination of D-amino acids. The polypeptide is D-amino acid dehydrogenase (Paramagnetospirillum magneticum (strain ATCC 700264 / AMB-1) (Magnetospirillum magneticum)).